Consider the following 232-residue polypeptide: Heptaprenylglyceryl phosphate synthase (232 aa).

Lys-12 provides a ligand contact to sn-glycerol 1-phosphate. Asp-14 and Thr-40 together coordinate Mg(2+). Sn-glycerol 1-phosphate is bound by residues 159–164 (YLEYSG), Gly-189, and 209–210 (GN).

The protein belongs to the GGGP/HepGP synthase family. Group I subfamily. In terms of assembly, homodimer. Requires Mg(2+) as cofactor.

The enzyme catalyses sn-glycerol 1-phosphate + all-trans-heptaprenyl diphosphate = 3-heptaprenyl-sn-glycero-1-phosphate + diphosphate. It participates in membrane lipid metabolism; glycerophospholipid metabolism. Functionally, prenyltransferase that catalyzes in vivo the transfer of the heptaprenyl moiety of heptaprenyl pyrophosphate (HepPP; 35 carbon atoms) to the C3 hydroxyl of sn-glycerol-1-phosphate (G1P), producing heptaprenylglyceryl phosphate (HepGP). This reaction is an ether-bond-formation step in the biosynthesis of archaea-type G1P-based membrane lipids found in Bacillales. The chain is Heptaprenylglyceryl phosphate synthase from Shouchella clausii (strain KSM-K16) (Alkalihalobacillus clausii).